A 522-amino-acid polypeptide reads, in one-letter code: Light-independent protochlorophyllide reductase subunit B (522 aa).

Asp36 lines the [4Fe-4S] cluster pocket. The Proton donor role is filled by Asp290. 425 to 426 (GL) serves as a coordination point for substrate.

It belongs to the ChlB/BchB/BchZ family. Protochlorophyllide reductase is composed of three subunits; ChlL, ChlN and ChlB. Forms a heterotetramer of two ChlB and two ChlN subunits. [4Fe-4S] cluster is required as a cofactor.

It catalyses the reaction chlorophyllide a + oxidized 2[4Fe-4S]-[ferredoxin] + 2 ADP + 2 phosphate = protochlorophyllide a + reduced 2[4Fe-4S]-[ferredoxin] + 2 ATP + 2 H2O. It functions in the pathway porphyrin-containing compound metabolism; chlorophyll biosynthesis (light-independent). Functionally, component of the dark-operative protochlorophyllide reductase (DPOR) that uses Mg-ATP and reduced ferredoxin to reduce ring D of protochlorophyllide (Pchlide) to form chlorophyllide a (Chlide). This reaction is light-independent. The NB-protein (ChlN-ChlB) is the catalytic component of the complex. This chain is Light-independent protochlorophyllide reductase subunit B, found in Synechococcus sp. (strain CC9311).